We begin with the raw amino-acid sequence, 141 residues long: Hemoglobin subunit alpha (141 aa).

Positions 1 to 141 (VLSPEDKNHV…VSTVLTSKYR (141 aa)) constitute a Globin domain. S3 bears the Phosphoserine mark. N6-succinyllysine is present on K7. Residue K16 is modified to N6-acetyllysine; alternate. Position 16 is an N6-succinyllysine; alternate (K16). Y24 carries the post-translational modification Phosphotyrosine. Position 35 is a phosphoserine (S35). N6-succinyllysine is present on K40. S49 is modified (phosphoserine). Residue H58 participates in O2 binding. H87 provides a ligand contact to heme b. S102 is subject to Phosphoserine. T108 is modified (phosphothreonine). Phosphoserine occurs at positions 124 and 131. Residues T134 and T137 each carry the phosphothreonine modification. S138 bears the Phosphoserine mark.

Belongs to the globin family. In terms of assembly, heterotetramer of two alpha chains and two beta chains. As to expression, red blood cells.

Its function is as follows. Involved in oxygen transport from the lung to the various peripheral tissues. Hemopressin acts as an antagonist peptide of the cannabinoid receptor CNR1. Hemopressin-binding efficiently blocks cannabinoid receptor CNR1 and subsequent signaling. The sequence is that of Hemoglobin subunit alpha (HBA) from Spalax ehrenbergi (Middle East blind mole rat).